Consider the following 3106-residue polypeptide: Cilia- and flagella-associated protein 54 (3106 aa).

Low complexity-rich tracts occupy residues 1–24 (MASS…VSPV), 34–48 (STAV…KSSS), and 2356–2368 (ESCS…TSTT). 2 disordered regions span residues 1 to 58 (MASS…THSE) and 2354 to 2374 (PEES…KDDS).

Belongs to the CFAP54 family. In terms of tissue distribution, expressed at high level in the testis and at a low level in the lung and brain.

It is found in the cytoplasm. It localises to the cytoskeleton. The protein resides in the cilium axoneme. Functionally, required for assembly and function of cilia and flagella. The polypeptide is Cilia- and flagella-associated protein 54 (Mus musculus (Mouse)).